We begin with the raw amino-acid sequence, 195 residues long: Recombination protein RecR (195 aa).

Residues 53–68 (CTICHNLDTISPCSIC) form a C4-type zinc finger. Positions 76–171 (SIICVVEELG…KVTRLACGIP (96 aa)) constitute a Toprim domain.

This sequence belongs to the RecR family.

Its function is as follows. May play a role in DNA repair. It seems to be involved in an RecBC-independent recombinational process of DNA repair. It may act with RecF and RecO. This is Recombination protein RecR from Anaplasma marginale (strain St. Maries).